A 1052-amino-acid polypeptide reads, in one-letter code: SWI/SNF-related matrix-associated actin-dependent regulator of chromatin subfamily A member 5 (1052 aa).

The span at 1–15 (MSSAAEPPPPPPPES) shows a compositional bias: pro residues. Positions 1 to 83 (MSSAAEPPPP…QEPDPTYEEK (83 aa)) are disordered. Ser2 is subject to N-acetylserine. Over residues 16–55 (APSKPAASIASGGSNSSNKGGPEGVAAQAVASAASAGPAD) the composition is skewed to low complexity. Residue Ser66 is modified to Phosphoserine. The span at 69–83 (KQKEIQEPDPTYEEK) shows a compositional bias: basic and acidic residues. Residue Lys83 forms a Glycyl lysine isopeptide (Lys-Gly) (interchain with G-Cter in SUMO2) linkage. The residue at position 113 (Thr113) is a Phosphothreonine. Residues Ser116, Ser137, and Ser171 each carry the phosphoserine modification. The 166-residue stretch at 192-357 (ISLYENGING…WSLLNFLLPD (166 aa)) folds into the Helicase ATP-binding domain. ATP is bound at residue 205–212 (DEMGLGKT). Positions 308–311 (DEAH) match the DEAH box motif. Position 440 is an N6-acetyllysine (Lys440). Residues 487–638 (VLDKLLPKLK…SIVIQQGRLV (152 aa)) enclose the Helicase C-terminal domain. Residues Lys644, Lys647, Lys694, Lys722, and Lys735 each participate in a glycyl lysine isopeptide (Lys-Gly) (interchain with G-Cter in SUMO2) cross-link. Residues Ser755 and Ser825 each carry the phosphoserine modification. 2 SANT domains span residues 840–892 (QGFT…ERCN) and 943–1007 (KGKN…LITL). Lys966 participates in a covalent cross-link: Glycyl lysine isopeptide (Lys-Gly) (interchain with G-Cter in SUMO2). The interval 1015–1052 (LEEKEKAEKKKRGPKPSTQKRKMDGAPDGRGRKKKLKL) is disordered. A compositionally biased stretch (basic residues) spans 1023-1034 (KKKRGPKPSTQK). The span at 1035-1044 (RKMDGAPDGR) shows a compositional bias: basic and acidic residues.

Belongs to the SNF2/RAD54 helicase family. ISWI subfamily. In terms of assembly, component of the ACF-5 ISWI chromatin-remodeling complex (also called the ACF/WCRF complex) at least composed of SMARCA5/SNF2H and BAZ1A/ACF1, which regulates the spacing of histone octamers on the DNA template to facilitate access to DNA. Within the complex interacts with BAZ1A/ACF1; the interaction is direct and is required to slide nucleosomes from end to center positions on a DNA template in an ATP-dependent manner. Component of the CHRAC ISWI chromatin-remodeling complex at least composed of SMARCA5/SNF2H, BAZ1A/ACF1, CHRAC1 and POLE3; the complex preferentially binds DNA through the CHRAC1-POLE3 heterodimer and possesses ATP-dependent nucleosome-remodeling activity. Within the complex interacts with BAZ1A/ACF1; the interaction is direct and promotes the interaction with the POLE3-CHRAC1 heterodimer. Within the complex interacts with the POLE3-CHRAC1 heterodimer; the interaction is direct and enhances nucleosome sliding activity by the SMARCA5/SNF2H and BAZ1A/ACF1 interaction. Neither POLE3 nor CHRAC1 enhances nucleosome sliding activity of the ACF-5 ISWI chromatin remodeling complex. Component of the WICH-5 ISWI chromatin-remodeling complex (also called the WICH complex) at least composed of SMARCA5/SNF2H and BAZ1B/WSTF, which regulates the spacing of histone octamers on the DNA template to facilitate access to DNA. Within the complex interacts with BAZ1B/WSTF. Component of the NoRC-5 ISWI chromatin-remodeling complex (also called the NoRC chromatin-remodeling complex) at least composed of SMARCA5/SNF2H and BAZ2A/TIP5; the complex suppresses rDNA transcription by a combination of nucleosome remodeling, histone deacetylation, and DNA methylation. Within the complex interacts with BAZ2A/TIP5. Within the complex interacts with HDAC1. Component of the BRF-5 ISWI chromatin-remodeling complex at least composed of SMARCA5/SNF2H and BAZ2B. Within the complex interacts with BAZ2B. Component of the NURF-5 ISWI chromatin-remodeling complex at least composed of SMARCA5/SNF2H and BPTF. Within the complex interacts with BPFT. Component of the CERF-5 ISWI chromatin-remodeling complex at least composed of SMARCA5/SNF2H and CECR2. LUZP1 is detected as part of the CERF-5 complex in embryonic stem cells where it is involved in complex stabilization but is not detected in the complex in the testis. Within the complex interacts with CECR2. Component of the RSF-5 ISWI chromatin-remodeling complex (also called the RSF complex) at least composed of SMARCA5/SNF2H and RSF1. Within the complex interacts with RSF1. Interacts with the cohesin complex component RAD21; the interaction is direct. Interacts with the NuRD complex components HDAC2, RBBP4 and CHD4; the interactions are direct. Interacts with PCNA. Component of the B-WICH complex, at least composed of SMARCA5/SNF2H, BAZ1B/WSTF, SF3B1, DEK, MYO1C, ERCC6, MYBBP1A and DDX21 which positively regulates RNA polymerase III transcription. Interacts with MYO1C. Interacts with BEND3. Interacts with SIRT6; promoting recruitment to DNA damage sites. As to quaternary structure, (Microbial infection) Interacts with JC virus small t antigen. (Microbial infection) Interacts with Epstein Barr virus (EBV) lytic switch protein BZLF1; this interaction participates to the activation of early lytic viral genes by BZLF1. Ubiquitously expressed.

Its subcellular location is the nucleus. It is found in the chromosome. It catalyses the reaction ATP + H2O = ADP + phosphate + H(+). Functionally, ATPase that possesses intrinsic ATP-dependent nucleosome-remodeling activity. Catalytic subunit of ISWI chromatin-remodeling complexes, which form ordered nucleosome arrays on chromatin and facilitate access to DNA during DNA-templated processes such as DNA replication, transcription, and repair; this may require intact histone H4 tails. Within the ISWI chromatin-remodeling complexes, slides edge- and center-positioned histone octamers away from their original location on the DNA template. Catalytic activity and histone octamer sliding propensity is regulated and determined by components of the ISWI chromatin-remodeling complexes. The BAZ1A/ACF1-, BAZ1B/WSTF-, BAZ2A/TIP5- and BAZ2B-containing ISWI chromatin-remodeling complexes regulate the spacing of nucleosomes along the chromatin and have the ability to slide mononucleosomes to the center of a DNA template in an ATP-dependent manner. The CECR2- and RSF1-containing ISWI chromatin-remodeling complexes do not have the ability to slide mononucleosomes to the center of a DNA template. Binds to core histones together with RSF1, and is required for the assembly of regular nucleosome arrays by the RSF-5 ISWI chromatin-remodeling complex. Involved in DNA replication and together with BAZ1A/ACF1 is required for replication of pericentric heterochromatin in S-phase. Probably plays a role in repression of RNA polymerase I dependent transcription of the rDNA locus, through the recruitment of the SIN3/HDAC1 corepressor complex to the rDNA promoter. Essential component of the WICH-5 ISWI chromatin-remodeling complex (also called the WICH complex), a chromatin-remodeling complex that mobilizes nucleosomes and reconfigures irregular chromatin to a regular nucleosomal array structure. The WICH-5 ISWI chromatin-remodeling complex regulates the transcription of various genes, has a role in RNA polymerase I transcription. Within the B-WICH complex has a role in RNA polymerase III transcription. Mediates the histone H2AX phosphorylation at 'Tyr-142', and is involved in the maintenance of chromatin structures during DNA replication processes. Essential component of NoRC-5 ISWI chromatin-remodeling complex, a complex that mediates silencing of a fraction of rDNA by recruiting histone-modifying enzymes and DNA methyltransferases, leading to heterochromatin formation and transcriptional silencing. The polypeptide is SWI/SNF-related matrix-associated actin-dependent regulator of chromatin subfamily A member 5 (Homo sapiens (Human)).